The following is a 149-amino-acid chain: 3-dehydroquinate dehydratase (149 aa).

Residue Tyr22 is the Proton acceptor of the active site. Substrate contacts are provided by Asn74, His80, and Asp87. Residue His100 is the Proton donor of the active site. Substrate is bound by residues 101–102 (MS) and Arg111.

The protein belongs to the type-II 3-dehydroquinase family. Homododecamer.

The enzyme catalyses 3-dehydroquinate = 3-dehydroshikimate + H2O. It functions in the pathway metabolic intermediate biosynthesis; chorismate biosynthesis; chorismate from D-erythrose 4-phosphate and phosphoenolpyruvate: step 3/7. Its function is as follows. Catalyzes a trans-dehydration via an enolate intermediate. The chain is 3-dehydroquinate dehydratase from Leptothrix cholodnii (strain ATCC 51168 / LMG 8142 / SP-6) (Leptothrix discophora (strain SP-6)).